The primary structure comprises 485 residues: Aspartyl/glutamyl-tRNA(Asn/Gln) amidotransferase subunit B (485 aa).

Belongs to the GatB/GatE family. GatB subfamily. In terms of assembly, heterotrimer of A, B and C subunits.

The enzyme catalyses L-glutamyl-tRNA(Gln) + L-glutamine + ATP + H2O = L-glutaminyl-tRNA(Gln) + L-glutamate + ADP + phosphate + H(+). The catalysed reaction is L-aspartyl-tRNA(Asn) + L-glutamine + ATP + H2O = L-asparaginyl-tRNA(Asn) + L-glutamate + ADP + phosphate + 2 H(+). In terms of biological role, allows the formation of correctly charged Asn-tRNA(Asn) or Gln-tRNA(Gln) through the transamidation of misacylated Asp-tRNA(Asn) or Glu-tRNA(Gln) in organisms which lack either or both of asparaginyl-tRNA or glutaminyl-tRNA synthetases. The reaction takes place in the presence of glutamine and ATP through an activated phospho-Asp-tRNA(Asn) or phospho-Glu-tRNA(Gln). In Borrelia hermsii (strain HS1 / DAH), this protein is Aspartyl/glutamyl-tRNA(Asn/Gln) amidotransferase subunit B.